The following is a 390-amino-acid chain: Telobox protein 1 (390 aa).

The tract at residues 30 to 57 (ENPSKREVAQDVPGFERKPTKVRKPRVK) is disordered. Residues 32–48 (PSKREVAQDVPGFERKP) are compositionally biased toward basic and acidic residues. HTH myb-type domains lie at 50–109 (KVRK…PEDY) and 135–193 (STRK…PERY). Residues 78–105 (WKKILLDERFHFTNRSPNDLKDRFRTIL) constitute a DNA-binding region (H-T-H motif). Positions 115–143 (NAKTHMGRPQKIPHTVGLSKSTRKERKQF) are disordered. The segment at residues 162–189 (WTRISKDANLGLQNRRSTDLRDRFRNAF) is a DNA-binding region (H-T-H motif). Composition is skewed to polar residues over residues 244-257 (SNPNASPQQTTEQP) and 322-340 (ISPSTSQNSVQPFPFSIQQ). 2 disordered regions span residues 244-278 (SNPNASPQQTTEQPASDELLDWPHHNLPSQFFTSQ) and 316-390 (QPPS…DNRG). Residues 347 to 360 (PPLSSNTLNSSTLP) are compositionally biased toward low complexity.

Its subcellular location is the nucleus. Functionally, general transcription factor with prominent roles in controlling histone levels and stability. Binds and regulates the activities of many promoters, including those controlling the expression of all four types of canonical histones. Is also involved in the centromeric loading of cnp1 and maintenance of centromere identity. Moreover, regulates the expression of cdc2, a protease capable of histone clipping. This Schizosaccharomyces pombe (strain 972 / ATCC 24843) (Fission yeast) protein is Telobox protein 1.